The primary structure comprises 209 residues: MEIEKLLEQVNWEKNNGIVPVIVQDEKGEVLTLAYMNKEALRKTLETGIAHYYSRSKGRIRMKGEVSGNIQTVKEIKIDCDNDALLLIVSPKGPACHTGNYSCFYRKLGEPERVLPIDYSLSILKELEEIIKRRKETPVEGSYTSKLFKEGREKIYKKFGEEAIEVLVAEKRERIIYEVADLLYHLLVLLTYNDISLGEVMNELRRRRK.

The tract at residues 1–123 (MEIEKLLEQV…VLPIDYSLSI (123 aa)) is phosphoribosyl-AMP cyclohydrolase. The interval 124–209 (LKELEEIIKR…VMNELRRRRK (86 aa)) is phosphoribosyl-ATP pyrophosphohydrolase.

It in the N-terminal section; belongs to the PRA-CH family. This sequence in the C-terminal section; belongs to the PRA-PH family.

The protein resides in the cytoplasm. The enzyme catalyses 1-(5-phospho-beta-D-ribosyl)-ATP + H2O = 1-(5-phospho-beta-D-ribosyl)-5'-AMP + diphosphate + H(+). It catalyses the reaction 1-(5-phospho-beta-D-ribosyl)-5'-AMP + H2O = 1-(5-phospho-beta-D-ribosyl)-5-[(5-phospho-beta-D-ribosylamino)methylideneamino]imidazole-4-carboxamide. It functions in the pathway amino-acid biosynthesis; L-histidine biosynthesis; L-histidine from 5-phospho-alpha-D-ribose 1-diphosphate: step 2/9. Its pathway is amino-acid biosynthesis; L-histidine biosynthesis; L-histidine from 5-phospho-alpha-D-ribose 1-diphosphate: step 3/9. The sequence is that of Histidine biosynthesis bifunctional protein HisIE (hisI) from Pyrococcus furiosus (strain ATCC 43587 / DSM 3638 / JCM 8422 / Vc1).